Consider the following 240-residue polypeptide: MAAAAPSRVSVRAAAPGQTGGFAKIRPQVVVAAAARSAGVSGRRARSVRASLFSPKPATPKDARPAKVQEMFVYEINERDRESPAYLRLSAKQTENALGDLVPFTNKLYSGSLDKRLGISAGICILIQHVPERNGDRYEAIYSFYFGDYGHISVQGPYLTYEESYLAVTGGSGVFEGAYGQVKLNQIVFPFKIFYTFYLKGIPDLPRELLCTPVPPSPTVEPTPAAKATEPHACLNNFTN.

A chloroplast-targeting transit peptide spans 1–49; that stretch reads MAAAAPSRVSVRAAAPGQTGGFAKIRPQVVVAAAARSAGVSGRRARSVR.

It belongs to the allene oxide cyclase family.

The protein localises to the plastid. It is found in the chloroplast. The enzyme catalyses (9Z,13S,15Z)-12,13-epoxyoctadeca-9,11,15-trienoate = (9S,13S,15Z)-12-oxophyto-10,15-dienoate. The protein operates within lipid metabolism; polyunsaturated fatty acid biosynthesis. In terms of biological role, involved in the production of 12-oxo-phytodienoic acid (OPDA), a precursor of jasmonic acid (JA). Required for the production of JA in response to wounding. Necessary for flower and coleoptile development regulation by light, including blue (BL), red (RL) and far red (FR) lights. Involved in the auxin-mediated signaling pathway leading to growth stimulation. Essential for photodestruction of phyA upon activation by RL and FR. Implicated in responses to salt stress (NaCl). Its function is as follows. Confers resistance to incompatible strains of the blast fungus Magnaporthe grisea, jasmonic acid (JA) thus playing a significant role in the resistance to fungal infection. Implicated in riboflavin-induced resistance to the sheath blight Rhizoctonia solani. Required for Pseudomonas fluorescens-mediated JA-dependent induced systemic resistance (ISR). Confers some resistance, independently of the JA pathway but probably via OPDA accumulation, to brown planthopper (BPH, Nilaparvata lugens), a destructive, monophagous, piercing-sucking insect, mainly by reducing its feeding activity and survival rate. Triggers resistance to the chewing insect striped stem borer (SSB) Chilo suppressalis, to the root hemiparasite witchweed Striga hermonthica, and to the root feeder insect rice water weevil Lissorhoptrus oryzophilus, in a JA-dependent manner, by attenuating both the growth mass and growth rate of caterpillars. In Oryza sativa subsp. indica (Rice), this protein is Allene oxide cyclase, chloroplastic.